Reading from the N-terminus, the 92-residue chain is Small ribosomal subunit protein uS19c (92 aa).

This sequence belongs to the universal ribosomal protein uS19 family.

Its subcellular location is the plastid. It localises to the chloroplast. Protein S19 forms a complex with S13 that binds strongly to the 16S ribosomal RNA. This is Small ribosomal subunit protein uS19c from Chlorokybus atmophyticus (Soil alga).